The following is a 530-amino-acid chain: Glucose-6-phosphate isomerase (530 aa).

The active-site Proton donor is Glu-356. Active-site residues include His-387 and Lys-502.

Belongs to the GPI family.

It localises to the cytoplasm. The enzyme catalyses alpha-D-glucose 6-phosphate = beta-D-fructose 6-phosphate. The protein operates within carbohydrate biosynthesis; gluconeogenesis. Its pathway is carbohydrate degradation; glycolysis; D-glyceraldehyde 3-phosphate and glycerone phosphate from D-glucose: step 2/4. Catalyzes the reversible isomerization of glucose-6-phosphate to fructose-6-phosphate. This Borrelia garinii subsp. bavariensis (strain ATCC BAA-2496 / DSM 23469 / PBi) (Borreliella bavariensis) protein is Glucose-6-phosphate isomerase.